We begin with the raw amino-acid sequence, 187 residues long: Orotate phosphoribosyltransferase (187 aa).

Residues Arg-98, Lys-99, Lys-102, His-104, and Glu-128 to Ser-136 each bind 5-phospho-alpha-D-ribose 1-diphosphate. The orotate site is built by Thr-132 and Arg-160.

It belongs to the purine/pyrimidine phosphoribosyltransferase family. PyrE subfamily. In terms of assembly, homodimer. Mg(2+) serves as cofactor.

The enzyme catalyses orotidine 5'-phosphate + diphosphate = orotate + 5-phospho-alpha-D-ribose 1-diphosphate. The protein operates within pyrimidine metabolism; UMP biosynthesis via de novo pathway; UMP from orotate: step 1/2. Catalyzes the transfer of a ribosyl phosphate group from 5-phosphoribose 1-diphosphate to orotate, leading to the formation of orotidine monophosphate (OMP). The protein is Orotate phosphoribosyltransferase of Bradyrhizobium diazoefficiens (strain JCM 10833 / BCRC 13528 / IAM 13628 / NBRC 14792 / USDA 110).